The chain runs to 293 residues: Probable E3 ubiquitin-protein ligase RNF144A-A (293 aa).

Positions 16 to 237 are TRIAD supradomain; that stretch reads PLVSCKLCLG…YDKGPCRNKL (222 aa). Zn(2+) is bound by residues C20, C23, C43, C46, C111, C116, C135, C138, C143, C146, H151, C156, C186, and C189. The RING-type 1 zinc finger occupies 20 to 70; the sequence is CKLCLGEFPLEQMTTITQCQCVFCTMCLKQYVELLIKEGFETAISCPDSAC. The IBR-type zinc-finger motif lies at 91–156; it reads QRYRKLQFEK…KASWHPDQDC (66 aa). The RING-type 2; atypical zinc-finger motif lies at 186–215; that stretch reads CPKCKVYIERDEGCAQMMCKNCKHAFCWYC. C199 is an active-site residue. Zn(2+) is bound by residues C204, C207, C212, C215, H227, and C233. The chain crosses the membrane as a helical span at residues 251-271; that stretch reads VVGIFAGFGLLLLVASPFLLL.

This sequence belongs to the RBR family. RNF144 subfamily.

It is found in the membrane. The catalysed reaction is [E2 ubiquitin-conjugating enzyme]-S-ubiquitinyl-L-cysteine + [acceptor protein]-L-lysine = [E2 ubiquitin-conjugating enzyme]-L-cysteine + [acceptor protein]-N(6)-ubiquitinyl-L-lysine.. It participates in protein modification; protein ubiquitination. E3 ubiquitin-protein ligase which accepts ubiquitin from E2 ubiquitin-conjugating enzymes ube2l3 and ube2l6 in the form of a thioester and then directly transfers the ubiquitin to targeted substrates. In Danio rerio (Zebrafish), this protein is Probable E3 ubiquitin-protein ligase RNF144A-A (rnf144aa).